The chain runs to 516 residues: Cytochrome P450 93G1 (516 aa).

The chain crosses the membrane as a helical span at residues 11-31 (LLGMGTTMGALALALVVVVVV). Cys-454 is a heme binding site.

This sequence belongs to the cytochrome P450 family. It depends on heme as a cofactor.

It localises to the membrane. It carries out the reaction a flavanone + reduced [NADPH--hemoprotein reductase] + O2 = a flavone + oxidized [NADPH--hemoprotein reductase] + 2 H2O + H(+). The protein operates within secondary metabolite biosynthesis; flavonoid biosynthesis. Functionally, functions as a flavone synthase II (FNSII) that catalyzes the direct conversion of flavanones to flavones. In vitro, can convert naringenin and eriodictyol to apigenin and luteolin, respectively. Acts as a key branch point enzyme that channels flavanones to the biosynthesis of soluble tricin O-linked conjugates. The sequence is that of Cytochrome P450 93G1 from Oryza sativa subsp. japonica (Rice).